Here is a 193-residue protein sequence, read N- to C-terminus: Ion-translocating oxidoreductase complex subunit A (193 aa).

6 consecutive transmembrane segments (helical) span residues 5–25 (LLLF…FLGL), 47–67 (FVMT…LVPL), 72–92 (LRTM…EMVV), 102–122 (LLGI…VALL), 134–154 (ALYG…FAAI), and 171–191 (AIAL…SGLV).

This sequence belongs to the NqrDE/RnfAE family. The complex is composed of six subunits: RnfA, RnfB, RnfC, RnfD, RnfE and RnfG.

The protein resides in the cell inner membrane. Its function is as follows. Part of a membrane-bound complex that couples electron transfer with translocation of ions across the membrane. In Cronobacter sakazakii (strain ATCC BAA-894) (Enterobacter sakazakii), this protein is Ion-translocating oxidoreductase complex subunit A.